The sequence spans 362 residues: MVVIYLNSTGNTYWIPIYSLNDKIREPYIFYVFAIFQTSIYILTGYILVRICWIFLTIKVFHDNMNIMMCWFLCQWFQAFLAKIVLIPYQFGIIKISMDINKTYYDWWSDTVEKSAILREDVNIWPIYFASYFLWHYMYSILFAVLAVGLERVCATWYIQDYEHVSRRHIPILLIAATNLITLPYAYQTTNNRTPLLQTCLQSIFIGSVAVFGYIMLWRVNLAWRNRIVNLKFTHNEKYSLARKFQIEENIKSLILARKLVVSASVFILVVTILLAVLLFDPHGYDAFFVHALDNSMLLPALVMSLTLLSCSPAWKERFISGLPIIRRLKSSSVAHQNSYSTASSAGKETEAYFEQLRSSWA.

Helical transmembrane passes span Ile-29 to Val-49, Ile-67 to Ile-87, Ile-127 to Ala-147, Ile-170 to Thr-190, Ile-204 to Trp-224, Leu-260 to Phe-280, and Phe-288 to Leu-308.

It belongs to the nematode receptor-like protein sre family.

The protein resides in the membrane. The chain is Serpentine receptor class epsilon-37 (sre-37) from Caenorhabditis elegans.